A 580-amino-acid chain; its full sequence is MTKLFNDPARFTEDMLVGFLDANSRYVVGVPGGVVRAQTTRPGKVAVVIGGGSGHYPAFCGTVGPGFADGAVVGNIFTSPSAEEAASVARAAHSDAGVLLTTGNYAGDVMNFNLAVDQLRSEGIEAQYFAVTDDVASAERGQEAKRRGIAGDFTVFKCASAAAEEGLDLAGVVRVAEAANAATRTLGVAFDGCTLPGADHPLFTVPEGHMGLGLGIHGEPGVSEEKMPTAAGLAATLVDGVLGDRPDAPEKRIAVILNGLGRTKYEELFVVWGEVSRLLRDRGYTIVEPEVGELVTSLDMAGCSLTVMWLDEELERYWAAPADTPAYKKGAAQQHVSGERRSEATARSASSGPKLAELSDEDGRAGARLVARAFDAMAEALADAEEELGRIDAVAGDGDHGRGMVKGSSAAREAAASALSEGAGQGSVLNAAGKAWAAKAGGTSGVLWGALLTALGARLGDTGRPDSSVIAAGVRDAYDALIRLGGAAPGDKTMLDAMLPFTEELERRVAQDESWQSAWRAAADVATEAARATADLRPKIGRARPLAERSVGTPDAGATSLALCARTVADCVTLSTQGEN.

The DhaK domain maps to 7–327 (DPARFTEDML…WAAPADTPAY (321 aa)). His217 (tele-hemiaminal-histidine intermediate) is an active-site residue. A disordered region spans residues 329–360 (KGAAQQHVSGERRSEATARSASSGPKLAELSD). One can recognise a DhaL domain in the interval 368 to 570 (RLVARAFDAM…LALCARTVAD (203 aa)). ATP contacts are provided by residues 397–403 (DGDHGRG), 443–444 (TS), Gly485, Arg542, and 555–557 (DAG).

It catalyses the reaction D-erythrulose + ATP = D-erythrulose 4-phosphate + ADP + H(+). It functions in the pathway carbohydrate metabolism; erythritol degradation. Its pathway is carbohydrate metabolism; D-threitol degradation. In terms of biological role, catalyzes the phosphorylation of D-erythrulose to D-erythrulose-4P. Involved in the degradation pathways of erythritol and D-threitol, that allow M.smegmatis to grow on these compounds as the sole carbon source. The sequence is that of D-erythrulose kinase from Mycolicibacterium smegmatis (strain ATCC 700084 / mc(2)155) (Mycobacterium smegmatis).